The primary structure comprises 406 residues: Cholinephosphotransferase 1 (406 aa).

N-acetylalanine is present on A2. Residues 2 to 62 lie on the Cytoplasmic side of the membrane; it reads AAGAGARPAP…LLQWIPLWMA (61 aa). Residues 63-83 traverse the membrane as a helical segment; it reads PNSITLLGLAINMLTTLVLIS. N64 serves as a coordination point for CDP-choline. Over 84–93 the chain is Lumenal; that stretch reads YCPTVTEEAP. Residues 94-118 form a helical membrane-spanning segment; it reads YWTYLLCALGLFIYQSLDAIDGKQA. Residues D111 and D114 each coordinate Mg(2+). R119 lines the CDP-choline pocket. The Cytoplasmic portion of the chain corresponds to 119–125; that stretch reads RRTNSCS. Residues 126–150 traverse the membrane as a helical segment; it reads PLGELFDHGCDSLSTVFMAVGASIA. D132 is a binding site for Mg(2+). H133 serves as the catalytic Proton acceptor. D136 lines the Mg(2+) pocket. The Lumenal portion of the chain corresponds to 151 to 160; sequence VRLGTHPDWL. A helical transmembrane segment spans residues 161-179; it reads FFCSFIGMFMFYCAHWQTY. Over 180-190 the chain is Cytoplasmic; sequence VSGVLRFGKVD. A helical transmembrane segment spans residues 191–207; it reads VTEIQIALVIVFVLSTF. At 208–222 the chain is on the lumenal side; sequence GGATMWDYTIPILEI. A helical transmembrane segment spans residues 223–248; the sequence is KLKILPVLGVVGGAIFSCSNYFHVIL. The Cytoplasmic segment spans residues 249–265; sequence HGGVGKNGSTIAGTSVL. The chain crosses the membrane as a helical span at residues 266 to 281; sequence SPGLHIGIIIILAIMI. At 282–293 the chain is on the lumenal side; it reads YKKSATNLFEKH. A helical membrane pass occupies residues 294–316; that stretch reads PCLYTLMFGCVFAKVSQKLVIAH. The Cytoplasmic portion of the chain corresponds to 317–329; the sequence is MTKSELYLQDTVF. Residues 330 to 339 traverse the membrane as a helical segment; sequence IGPGLLFLDQ. Topologically, residues 340–346 are lumenal; that stretch reads YFNNFVD. Residues 347 to 376 form a helical membrane-spanning segment; that stretch reads EYIVLWIAMVISSLDMMRYFSALCLQISRH. Residues 377–406 lie on the Cytoplasmic side of the membrane; that stretch reads LHLSIFKTSCHQAPEQVQVLPPKSHQNNMD.

This sequence belongs to the CDP-alcohol phosphatidyltransferase class-I family. Mg(2+) serves as cofactor. The cofactor is Mn(2+).

The protein resides in the golgi apparatus membrane. It catalyses the reaction CDP-choline + a 1,2-diacyl-sn-glycerol = a 1,2-diacyl-sn-glycero-3-phosphocholine + CMP + H(+). The catalysed reaction is 1-octadecanoyl-2-(5Z,8Z,11Z,14Z-eicosatetraenoyl)-sn-glycerol + CDP-choline = 1-octadecanoyl-2-(5Z,8Z,11Z,14Z-eicosatetraenoyl)-sn-glycero-3-phosphocholine + CMP + H(+). It carries out the reaction 1-hexadecanoyl-2-(9Z-octadecenoyl)-sn-glycerol + CDP-choline = 1-hexadecanoyl-2-(9Z-octadecenoyl)-sn-glycero-3-phosphocholine + CMP + H(+). The enzyme catalyses 1-hexadecanoyl-2-(4Z,7Z,10Z,13Z,16Z,19Z-docosahexaenoyl)-sn-glycerol + CDP-choline = 1-hexadecanoyl-2-(4Z,7Z,10Z,13Z,16Z,19Z-docosahexaenoyl)-sn-glycero-3-phosphocholine + CMP + H(+). It catalyses the reaction 1,2-dioctanoyl-sn-glycerol + CDP-choline = 1,2-dioctanoyl-sn-glycero-3-phosphocholine + CMP + H(+). Its pathway is phospholipid metabolism; phosphatidylcholine biosynthesis; phosphatidylcholine from phosphocholine: step 2/2. Catalyzes the final step of de novo phosphatidylcholine (PC) synthesis, i.e. the transfer of choline phosphate from CDP-choline to the free hydroxyl of a diacylglycerol (DAG), producing a PC. It thereby plays a central role in the formation and maintenance of vesicular membranes. This is Cholinephosphotransferase 1 (CHPT1) from Bos taurus (Bovine).